A 130-amino-acid chain; its full sequence is Capsid protein (130 aa).

Residues 32–105 (EWISSNSRSQ…FATNSDCELI (74 aa)) form a viral RNA-binding region.

The protein belongs to the Leviviricetes capsid protein family. As to quaternary structure, homodimer. The capsid proteins form dimers that assemble by group of 5. Twelve such pentamers are linked together with free dimers. The homodimers binds to the viral RNA via an operator hairpin, but also to many other RNA sequences in the viral genome; this interaction probably shifts the virus from the replicative to the assembly phase and ensures specific encapsidation of the viral genome.

It localises to the virion. Capsid protein self-assembles to form an icosahedral capsid with a T=3 symmetry, about 26 nm in diameter, and consisting of 89 capsid proteins dimers (178 capsid proteins). Involved in viral genome encapsidation through the interaction between a capsid protein dimer and the multiple packaging signals present in the RNA genome. The capsid also contains 1 copy of the A2 maturation protein. Functionally, acts as a translational repressor of viral replicase synthesis late in infection. This latter function is the result of capsid protein interaction with an RNA hairpin which contains the replicase ribosome-binding site. This chain is Capsid protein, found in Escherichia coli (Bacteriophage MS2).